Reading from the N-terminus, the 427-residue chain is tRNA(Ile)-lysidine synthase (427 aa).

Residue S25–S30 participates in ATP binding.

Belongs to the tRNA(Ile)-lysidine synthase family.

Its subcellular location is the cytoplasm. The enzyme catalyses cytidine(34) in tRNA(Ile2) + L-lysine + ATP = lysidine(34) in tRNA(Ile2) + AMP + diphosphate + H(+). Ligates lysine onto the cytidine present at position 34 of the AUA codon-specific tRNA(Ile) that contains the anticodon CAU, in an ATP-dependent manner. Cytidine is converted to lysidine, thus changing the amino acid specificity of the tRNA from methionine to isoleucine. This chain is tRNA(Ile)-lysidine synthase, found in Histophilus somni (strain 2336) (Haemophilus somnus).